Here is a 236-residue protein sequence, read N- to C-terminus: Purine nucleoside phosphorylase DeoD-type (236 aa).

His5 is an a purine D-ribonucleoside binding site. Residues Gly21, Arg25, Arg44, and 88-91 (RVGT) each bind phosphate. Residues 180–182 (EME) and 204–205 (SD) contribute to the a purine D-ribonucleoside site. Asp205 acts as the Proton donor in catalysis.

The protein belongs to the PNP/UDP phosphorylase family. As to quaternary structure, homohexamer; trimer of homodimers.

It catalyses the reaction a purine D-ribonucleoside + phosphate = a purine nucleobase + alpha-D-ribose 1-phosphate. The catalysed reaction is a purine 2'-deoxy-D-ribonucleoside + phosphate = a purine nucleobase + 2-deoxy-alpha-D-ribose 1-phosphate. Functionally, catalyzes the reversible phosphorolytic breakdown of the N-glycosidic bond in the beta-(deoxy)ribonucleoside molecules, with the formation of the corresponding free purine bases and pentose-1-phosphate. This Shewanella denitrificans (strain OS217 / ATCC BAA-1090 / DSM 15013) protein is Purine nucleoside phosphorylase DeoD-type.